The primary structure comprises 439 residues: Ribosomal protein uS12 methylthiotransferase RimO (439 aa).

In terms of domain architecture, MTTase N-terminal spans 7–119 (KQLCLISLGC…IDILIAKKQN (113 aa)). [4Fe-4S] cluster contacts are provided by cysteine 16, cysteine 50, cysteine 82, cysteine 151, cysteine 155, and cysteine 158. Residues 137–368 (TGSSVHAYVK…ALKHQNHSFK (232 aa)) form the Radical SAM core domain.

It belongs to the methylthiotransferase family. RimO subfamily. Requires [4Fe-4S] cluster as cofactor.

Its subcellular location is the cytoplasm. It catalyses the reaction L-aspartate(89)-[ribosomal protein uS12]-hydrogen + (sulfur carrier)-SH + AH2 + 2 S-adenosyl-L-methionine = 3-methylsulfanyl-L-aspartate(89)-[ribosomal protein uS12]-hydrogen + (sulfur carrier)-H + 5'-deoxyadenosine + L-methionine + A + S-adenosyl-L-homocysteine + 2 H(+). Functionally, catalyzes the methylthiolation of an aspartic acid residue of ribosomal protein uS12. This chain is Ribosomal protein uS12 methylthiotransferase RimO, found in Helicobacter pylori (strain J99 / ATCC 700824) (Campylobacter pylori J99).